A 261-amino-acid chain; its full sequence is Large ribosomal subunit protein uL10m (261 aa).

A mitochondrion-targeting transit peptide spans 1–28; sequence MAAAVAGMLRGGLLPQAGRLPTLQTVRY. Residues 242 to 261 form a disordered region; the sequence is EKDSVMSANGKPDPDTVPDS.

This sequence belongs to the universal ribosomal protein uL10 family. Component of the mitochondrial large ribosomal subunit (mt-LSU). Mature mammalian 55S mitochondrial ribosomes consist of a small (28S) and a large (39S) subunit. The 28S small subunit contains a 12S ribosomal RNA (12S mt-rRNA) and 30 different proteins. The 39S large subunit contains a 16S rRNA (16S mt-rRNA), a copy of mitochondrial valine transfer RNA (mt-tRNA(Val)), which plays an integral structural role, and 52 different proteins. uL10m contributes a single cysteine residue to a zinc-binding site with mL66.

The protein localises to the mitochondrion. The chain is Large ribosomal subunit protein uL10m (MRPL10) from Homo sapiens (Human).